A 357-amino-acid polypeptide reads, in one-letter code: Chorismate synthase (357 aa).

Arg-48 and Arg-54 together coordinate NADP(+). FMN-binding positions include 125 to 127, 243 to 244, Gly-283, 298 to 302, and Arg-324; these read RSS, NA, and KPTSS.

This sequence belongs to the chorismate synthase family. As to quaternary structure, homotetramer. FMNH2 serves as cofactor.

It carries out the reaction 5-O-(1-carboxyvinyl)-3-phosphoshikimate = chorismate + phosphate. It participates in metabolic intermediate biosynthesis; chorismate biosynthesis; chorismate from D-erythrose 4-phosphate and phosphoenolpyruvate: step 7/7. Catalyzes the anti-1,4-elimination of the C-3 phosphate and the C-6 proR hydrogen from 5-enolpyruvylshikimate-3-phosphate (EPSP) to yield chorismate, which is the branch point compound that serves as the starting substrate for the three terminal pathways of aromatic amino acid biosynthesis. This reaction introduces a second double bond into the aromatic ring system. The chain is Chorismate synthase from Pasteurella multocida (strain Pm70).